Here is a 384-residue protein sequence, read N- to C-terminus: Secreted LysM effector LysM14 (384 aa).

The first 35 residues, 1–35 (MGWSPRWKVMLRGIFNAMISIHILLSLLFAHIATA), serve as a signal peptide directing secretion. A LysM domain is found at 64–112 (YTYTIQEGDTCAKLAQRYQVTTSNIETWNVGSWGWPGCAKIKQGDFVCL). A disordered region spans residues 185–220 (STTKSAASKTTTTSNPTTTSKTTITSKPTTTSKPTT).

This sequence belongs to the secreted LysM effector family.

The protein localises to the secreted. In terms of biological role, secreted LysM effector that might have a role in sequestration of chitin oligosaccharides (breakdown products of fungal cell walls that are released during invasion and act as triggers of host immunity) to dampen host defense. The chain is Secreted LysM effector LysM14 from Penicillium expansum (Blue mold rot fungus).